The sequence spans 266 residues: Ras-like protein family member 12 (266 aa).

Residues 27–34 (GRRGAGKS), 74–78 (DTADL), and 134–137 (NKLD) each bind GTP.

Belongs to the small GTPase superfamily. Ras family.

It catalyses the reaction GTP + H2O = GDP + phosphate + H(+). The sequence is that of Ras-like protein family member 12 (Rasl12) from Mus musculus (Mouse).